Consider the following 24-residue polypeptide: Brevinin-1JDb (24 aa).

A disulfide bridge connects residues C18 and C24.

In terms of tissue distribution, expressed by the skin glands.

The protein localises to the secreted. In terms of biological role, has antibacterial activity against E.coli and S.aureus strains. Has antifungal activity against C.albicans. Has hemolytic activity against rabbit erythrocytes. This Odorrana jingdongensis (Jingdong frog) protein is Brevinin-1JDb.